The sequence spans 393 residues: Ig gamma-1 chain C region, membrane-bound form (393 aa).

Positions 1–97 are CH1; it reads AKTTPPSVYP…ASSTKVDKKI (97 aa). A disulfide bridge connects residues Cys27 and Cys82. A hinge region spans residues 98 to 110; sequence VPRDCGCKPCICT. The tract at residues 111–217 is CH2; it reads VPEVSSVFIF…PIEKTISKTK (107 aa). 2 disulfide bridges follow: Cys138–Cys198 and Cys244–Cys302. Asn174 is a glycosylation site (N-linked (GlcNAc...) asparagine). The interval 218 to 324 is CH3; the sequence is GRPKAPQVYT…EKSLSHSPGL (107 aa). Residues 340-357 form a helical membrane-spanning segment; that stretch reads GLWTTITIFISLFLLSVC. Residues 358–393 lie on the Cytoplasmic side of the membrane; sequence YSAAVTLFKVKWIFSSVVELKQTLVPEYKNMIGQAP.

Its subcellular location is the cell membrane. This chain is Ig gamma-1 chain C region, membrane-bound form (Ighg1), found in Mus musculus (Mouse).